The primary structure comprises 87 residues: Small ribosomal subunit protein bS18 (87 aa).

The protein belongs to the bacterial ribosomal protein bS18 family. As to quaternary structure, part of the 30S ribosomal subunit. Forms a tight heterodimer with protein bS6.

Its function is as follows. Binds as a heterodimer with protein bS6 to the central domain of the 16S rRNA, where it helps stabilize the platform of the 30S subunit. The protein is Small ribosomal subunit protein bS18 of Oleidesulfovibrio alaskensis (strain ATCC BAA-1058 / DSM 17464 / G20) (Desulfovibrio alaskensis).